A 707-amino-acid chain; its full sequence is SPX domain-containing membrane protein At4g11810 (707 aa).

Positions 2 to 145 constitute an SPX domain; it reads VAFGKKLKER…GYRFTNYYVK (144 aa). A run of 6 helical transmembrane segments spans residues 252–272, 283–303, 320–340, 342–361, 380–400, and 416–436; these read FMSL…TYII, LGAA…AQLF, LIFS…AYDF, SLAL…ARAV, AGFV…AGLL, and LPGW…AISF. Over residues 481 to 498 the composition is skewed to acidic residues; sequence EETEHDEEDDGDGSEESS. The disordered stretch occupies residues 481-503; that stretch reads EETEHDEEDDGDGSEESSDDSRK. 5 helical membrane-spanning segments follow: residues 523-543, 557-577, 586-606, 614-634, and 679-699; these read LLIY…SSVV, IFLF…GSYI, ILLA…HVVI, VISG…NLSL, and MLLN…ILAT.

This sequence belongs to the major facilitator superfamily.

The protein localises to the membrane. In Arabidopsis thaliana (Mouse-ear cress), this protein is SPX domain-containing membrane protein At4g11810.